Reading from the N-terminus, the 174-residue chain is Actin-related protein 2/3 complex subunit 3 (174 aa).

It belongs to the ARPC3 family. In terms of assembly, component of the Arp2/3 complex composed of arp2, act2, arc1/p41-ARC, arc2/p34-ARC, arc3/p21-ARC, arc4/p20-ARC and arc5/p16-ARC.

It is found in the cytoplasm. Its subcellular location is the cytoskeleton. The protein localises to the actin patch. In terms of biological role, functions as a component of the Arp2/3 complex which is involved in regulation of actin polymerization and together with an activating nucleation-promoting factor (NPF) mediates the formation of branched actin networks. This Schizosaccharomyces pombe (strain 972 / ATCC 24843) (Fission yeast) protein is Actin-related protein 2/3 complex subunit 3 (arc3).